Consider the following 102-residue polypeptide: NADH-quinone oxidoreductase subunit K (102 aa).

3 helical membrane-spanning segments follow: residues isoleucine 5–leucine 25, isoleucine 31–phenylalanine 51, and phenylalanine 66–phenylalanine 86.

This sequence belongs to the complex I subunit 4L family. As to quaternary structure, NDH-1 is composed of 14 different subunits. Subunits NuoA, H, J, K, L, M, N constitute the membrane sector of the complex.

It localises to the cell inner membrane. It carries out the reaction a quinone + NADH + 5 H(+)(in) = a quinol + NAD(+) + 4 H(+)(out). Its function is as follows. NDH-1 shuttles electrons from NADH, via FMN and iron-sulfur (Fe-S) centers, to quinones in the respiratory chain. The immediate electron acceptor for the enzyme in this species is believed to be ubiquinone. Couples the redox reaction to proton translocation (for every two electrons transferred, four hydrogen ions are translocated across the cytoplasmic membrane), and thus conserves the redox energy in a proton gradient. This chain is NADH-quinone oxidoreductase subunit K, found in Bartonella quintana (strain Toulouse) (Rochalimaea quintana).